Here is a 282-residue protein sequence, read N- to C-terminus: Parvulin-like PPIase (282 aa).

The signal sequence occupies residues 1 to 20 (MKKLSVIFLSVSMLSGIAFA). The PpiC domain maps to 138–231 (KEQIKVAHIL…FGWHIIKVLE (94 aa)).

Belongs to the PpiC/parvulin rotamase family.

It localises to the cell outer membrane. The enzyme catalyses [protein]-peptidylproline (omega=180) = [protein]-peptidylproline (omega=0). The sequence is that of Parvulin-like PPIase (plp) from Rickettsia conorii (strain ATCC VR-613 / Malish 7).